Here is a 497-residue protein sequence, read N- to C-terminus: Phenylalanine--tRNA ligase alpha subunit (497 aa).

L-phenylalanine is bound by residues threonine 329, 372 to 374 (QIE), and tyrosine 412. Glutamate 414 lines the Mg(2+) pocket. L-phenylalanine is bound at residue phenylalanine 438.

It belongs to the class-II aminoacyl-tRNA synthetase family. Phe-tRNA synthetase alpha subunit type 2 subfamily. As to quaternary structure, heterotetramer; dimer of two heterodimers formed by alpha and beta subunits. It depends on Mg(2+) as a cofactor.

It is found in the cytoplasm. It catalyses the reaction tRNA(Phe) + L-phenylalanine + ATP = L-phenylalanyl-tRNA(Phe) + AMP + diphosphate + H(+). This chain is Phenylalanine--tRNA ligase alpha subunit (farsa), found in Danio rerio (Zebrafish).